A 377-amino-acid polypeptide reads, in one-letter code: UPF0754 membrane protein lmo2224 (377 aa).

Transmembrane regions (helical) follow at residues 1–21 and 357–377; these read MSVL…GAMT and YLGG…AMWI.

This sequence belongs to the UPF0754 family.

It is found in the cell membrane. This Listeria monocytogenes serovar 1/2a (strain ATCC BAA-679 / EGD-e) protein is UPF0754 membrane protein lmo2224.